A 395-amino-acid chain; its full sequence is Tyrosine--tRNA ligase (395 aa).

The 'HIGH' region motif lies at 42–51 (PTAPDIHLGH). Residues 226-230 (KMSKS) carry the 'KMSKS' region motif. Residue lysine 229 participates in ATP binding. An S4 RNA-binding domain is found at 334 to 394 (IGLATLLKEA…GKRKFARVTV (61 aa)).

It belongs to the class-I aminoacyl-tRNA synthetase family. TyrS type 2 subfamily. As to quaternary structure, homodimer.

The protein resides in the cytoplasm. The catalysed reaction is tRNA(Tyr) + L-tyrosine + ATP = L-tyrosyl-tRNA(Tyr) + AMP + diphosphate + H(+). Catalyzes the attachment of tyrosine to tRNA(Tyr) in a two-step reaction: tyrosine is first activated by ATP to form Tyr-AMP and then transferred to the acceptor end of tRNA(Tyr). The polypeptide is Tyrosine--tRNA ligase (Haemophilus influenzae (strain 86-028NP)).